The primary structure comprises 70 residues: LSCYLGYKHSQTCPPGENVCFVKTWCDGFCNTRGERIIMGCAATCPTAKSGVHIACCSTDNCNIYAKWGS.

Disulfide bonds link Cys-3/Cys-20, Cys-13/Cys-41, Cys-26/Cys-30, Cys-45/Cys-56, and Cys-57/Cys-62. Serine amide is present on Ser-70.

The protein belongs to the three-finger toxin family. Long-chain subfamily. Type II alpha-neurotoxin sub-subfamily. Expressed by the venom gland.

The protein localises to the secreted. Its function is as follows. Binds with high affinity to muscular (alpha-1/CHRNA1) and neuronal (alpha-7/CHRNA7) nicotinic acetylcholine receptor (nAChR) and inhibits acetylcholine from binding to the receptor, thereby impairing neuromuscular and neuronal transmission. The protein is Alpha-elapitoxin-Ast2a of Hydrophis stokesii (Stokes's sea snake).